A 444-amino-acid polypeptide reads, in one-letter code: Protein-serine O-palmitoleoyltransferase porcupine (444 aa).

10 consecutive transmembrane segments (helical) span residues 29–49 (NGTL…FLVW), 81–101 (VMIF…KLNG), 128–150 (FLTL…FAIV), 163–183 (TLYL…YVTF), 201–221 (LGVF…AIIS), 249–269 (YFIC…IVVA), 304–324 (FFQS…LLHA), 326–346 (DYQM…ETVF), 383–403 (VLII…FTGM), and 420–440 (WTIW…FLAL). Residue H323 is part of the active site.

This sequence belongs to the membrane-bound acyltransferase family. Porcupine subfamily.

It is found in the membrane. It carries out the reaction [Wnt protein]-L-serine + (9Z)-hexadecenoyl-CoA = [Wnt protein]-O-(9Z)-hexadecenoyl-L-serine + CoA. In terms of biological role, key regulator of the Wnt signaling pathway that mediates lipid modification of Wnt proteins. Acts as a protein-serine O-palmitoleoyltransferase that catalyzes the attachment of palmitoleate, a 16-carbon monounsaturated fatty acid (C16:1(9Z)), to Wnt proteins. Serine palmitoleoylation of WNT proteins is required for efficient binding to frizzled receptors. Has a role in cell specification, specifically in blastomere signaling. Involved in cytosketetal polarity. Required for the orientation of mitotic spindle axis. The protein is Protein-serine O-palmitoleoyltransferase porcupine of Caenorhabditis briggsae.